Consider the following 183-residue polypeptide: Calcineurin subunit B type 2 (183 aa).

Gly-2 carries the N-myristoyl glycine lipid modification. 4 EF-hand domains span residues 25–60 (REIK…SMNP), 64–92 (RIIS…FHPK), 94–129 (DKAD…MVGS), and 135–170 (QISS…SGCN). Ca(2+) contacts are provided by Asp-107, Asn-109, Asp-111, and Glu-118.

The protein belongs to the calcineurin regulatory subunit family. In terms of assembly, calcineurin is composed of a catalytic subunit (A) and a regulatory subunit (B).

In terms of biological role, regulatory subunit of calcineurin, a calcium-dependent, calmodulin stimulated protein phosphatase. Confers calcium sensitivity. In Dictyostelium discoideum (Social amoeba), this protein is Calcineurin subunit B type 2 (cnbB).